Consider the following 424-residue polypeptide: Imidazolonepropionase (424 aa).

Fe(3+)-binding residues include H84 and H86. H84 and H86 together coordinate Zn(2+). 3 residues coordinate 4-imidazolone-5-propanoate: R93, Y156, and H189. Y156 serves as a coordination point for N-formimidoyl-L-glutamate. A Fe(3+)-binding site is contributed by H254. Position 254 (H254) interacts with Zn(2+). E257 contributes to the 4-imidazolone-5-propanoate binding site. D328 is a binding site for Fe(3+). D328 lines the Zn(2+) pocket. N330 and G332 together coordinate N-formimidoyl-L-glutamate. S333 is a binding site for 4-imidazolone-5-propanoate.

It belongs to the metallo-dependent hydrolases superfamily. HutI family. Zn(2+) serves as cofactor. The cofactor is Fe(3+).

The protein localises to the cytoplasm. The catalysed reaction is 4-imidazolone-5-propanoate + H2O = N-formimidoyl-L-glutamate. The protein operates within amino-acid degradation; L-histidine degradation into L-glutamate; N-formimidoyl-L-glutamate from L-histidine: step 3/3. Catalyzes the hydrolytic cleavage of the carbon-nitrogen bond in imidazolone-5-propanoate to yield N-formimidoyl-L-glutamate. It is the third step in the universal histidine degradation pathway. The protein is Imidazolonepropionase of Geobacillus kaustophilus (strain HTA426).